We begin with the raw amino-acid sequence, 535 residues long: Dual specificity calcium/calmodulin-dependent 3',5'-cyclic nucleotide phosphodiesterase 1B (535 aa).

A disordered region spans residues 1-21 (MELSPRSPPEMLESDCPSPLE). Phosphoserine occurs at positions 7 and 14. Calmodulin-binding stretches follow at residues 27–47 (SKKM…QLEN) and 117–140 (EKPK…MFRR). Residues 145-502 (VGPTYSTAVH…QKWKERAASG (358 aa)) enclose the PDEase domain. Histidine 222 serves as the catalytic Proton donor. 4 residues coordinate Zn(2+): histidine 226, histidine 262, aspartate 263, and aspartate 369. Aspartate 263 lines the Mg(2+) pocket. Disordered stretches follow at residues 445–474 (PLTD…GDPN) and 495–535 (WKER…GNLD). The span at 454–463 (KSQPSFQWRQ) shows a compositional bias: polar residues. Serine 465 and serine 513 each carry phosphoserine.

Belongs to the cyclic nucleotide phosphodiesterase family. PDE1 subfamily. Homodimer. Zn(2+) serves as cofactor. The cofactor is Mg(2+). Expressed in brain.

The protein localises to the cytoplasm. Its subcellular location is the cytosol. The catalysed reaction is a nucleoside 3',5'-cyclic phosphate + H2O = a nucleoside 5'-phosphate + H(+). It carries out the reaction 3',5'-cyclic GMP + H2O = GMP + H(+). It catalyses the reaction 3',5'-cyclic AMP + H2O = AMP + H(+). With respect to regulation, type I PDE are activated by the binding of calmodulin in the presence of Ca(2+). Functionally, cyclic nucleotide phosphodiesterase with a dual specificity for the second messengers cAMP and cGMP, which are key regulators of many important physiological processes. Has a preference for cGMP as a substrate. This Rattus norvegicus (Rat) protein is Dual specificity calcium/calmodulin-dependent 3',5'-cyclic nucleotide phosphodiesterase 1B.